The chain runs to 520 residues: GMP synthase [glutamine-hydrolyzing] (520 aa).

The Glutamine amidotransferase type-1 domain occupies 3–200; sequence AIAIIDFGSQ…FLDIANCKRD (198 aa). The active-site Nucleophile is Cys-84. Residues His-175 and Glu-177 contribute to the active site. A GMPS ATP-PPase domain is found at 201–386; it reads WTMKSIIEKQ…IGLSNEIIFQ (186 aa). 228-234 is an ATP binding site; it reads SGGVDSS.

In terms of assembly, homodimer.

It catalyses the reaction XMP + L-glutamine + ATP + H2O = GMP + L-glutamate + AMP + diphosphate + 2 H(+). Its pathway is purine metabolism; GMP biosynthesis; GMP from XMP (L-Gln route): step 1/1. Catalyzes the synthesis of GMP from XMP. The sequence is that of GMP synthase [glutamine-hydrolyzing] from Wolbachia sp. subsp. Brugia malayi (strain TRS).